Consider the following 441-residue polypeptide: Ribosomal protein uS12 methylthiotransferase RimO (441 aa).

The MTTase N-terminal domain occupies 8–118 (PKIGFVSLGC…VLEHVHHYVP (111 aa)). [4Fe-4S] cluster-binding residues include Cys-17, Cys-53, Cys-82, Cys-150, Cys-154, and Cys-157. Residues 136-373 (LTPRHYAYLK…MQLQQQISAE (238 aa)) form the Radical SAM core domain. A TRAM domain is found at 376 to 441 (QEKVGREILV…DEYDLWGSRV (66 aa)).

This sequence belongs to the methylthiotransferase family. RimO subfamily. The cofactor is [4Fe-4S] cluster.

Its subcellular location is the cytoplasm. The enzyme catalyses L-aspartate(89)-[ribosomal protein uS12]-hydrogen + (sulfur carrier)-SH + AH2 + 2 S-adenosyl-L-methionine = 3-methylsulfanyl-L-aspartate(89)-[ribosomal protein uS12]-hydrogen + (sulfur carrier)-H + 5'-deoxyadenosine + L-methionine + A + S-adenosyl-L-homocysteine + 2 H(+). Functionally, catalyzes the methylthiolation of an aspartic acid residue of ribosomal protein uS12. This chain is Ribosomal protein uS12 methylthiotransferase RimO, found in Escherichia coli (strain UTI89 / UPEC).